Here is a 131-residue protein sequence, read N- to C-terminus: Large ribosomal subunit protein uL22c (131 aa).

It belongs to the universal ribosomal protein uL22 family. As to quaternary structure, part of the 50S ribosomal subunit.

It localises to the plastid. Its function is as follows. This protein binds specifically to 23S rRNA. The globular domain of the protein is located near the polypeptide exit tunnel on the outside of the subunit, while an extended beta-hairpin is found that lines the wall of the exit tunnel in the center of the 70S ribosome. The sequence is that of Large ribosomal subunit protein uL22c (rpl22) from Aneura mirabilis (Parasitic liverwort).